The sequence spans 147 residues: Siroheme decarboxylase NirG subunit (147 aa).

Belongs to the Ahb/Nir family. Probably forms a complex composed of NirD, NirL, NirG and NirH. All proteins are required for the total conversion of siroheme to didecarboxysiroheme.

The enzyme catalyses siroheme + 2 H(+) = 12,18-didecarboxysiroheme + 2 CO2. Its pathway is porphyrin-containing compound metabolism. In terms of biological role, involved in heme d1 biosynthesis. Catalyzes the decarboxylation of siroheme into didecarboxysiroheme. This is Siroheme decarboxylase NirG subunit from Stutzerimonas stutzeri (Pseudomonas stutzeri).